The following is an 81-amino-acid chain: Defensin-like protein 266 (81 aa).

The first 26 residues, 1-26 (MEKIVFRKIVFVAFLLSLSCLLEGEA), serve as a signal peptide directing secretion. 3 cysteine pairs are disulfide-bonded: cysteine 40–cysteine 58, cysteine 46–cysteine 63, and cysteine 50–cysteine 65.

It belongs to the DEFL family.

It localises to the secreted. In Arabidopsis thaliana (Mouse-ear cress), this protein is Defensin-like protein 266.